A 236-amino-acid chain; its full sequence is Small ribosomal subunit protein uS2c (236 aa).

Belongs to the universal ribosomal protein uS2 family.

It localises to the plastid. The protein localises to the chloroplast. In Zea mays (Maize), this protein is Small ribosomal subunit protein uS2c (rps2).